The following is a 310-amino-acid chain: Proline iminopeptidase (310 aa).

In terms of domain architecture, AB hydrolase-1 spans Leu41–Glu288. The active-site Nucleophile is Ser116. The active site involves Asp255. His282 (proton donor) is an active-site residue.

This sequence belongs to the peptidase S33 family. As to quaternary structure, part of the tricorn proteolytic complex.

It catalyses the reaction Release of N-terminal proline from a peptide.. Functionally, cleaves H-Pro-AMC as well as a wide spectrum of amino acid substrates and several peptide substrates without a proline at the N-terminus. In conjunction with the three factors F1, F2 and F3, Tricorn degrades oligopeptides in a sequential manner, yielding free amino acids. The protein is Proline iminopeptidase (pip) of Saccharolobus solfataricus (strain ATCC 35092 / DSM 1617 / JCM 11322 / P2) (Sulfolobus solfataricus).